The sequence spans 338 residues: MKVYYDKDCDLSIIQGKKVAIIGYGSQGHAQACNLKDSGVDVTVGLRKGSATVAKAEAHGLKVTDVASAVAAADLVMILTPDEFQSALYKNEIEPNIKKGATLAFSHGFAIHYNQVVPRADLDVIMIAPKAPGHTVRSEFVKGGGIPDLIAIYQDASGNAKNVALSYAAGVGGGRTGIIETTFKDETETDLFGEQAVLCGGTVELVKAGFETLVEAGYAPEMAYFECLHELKLIVDLMYEGGIANMNYSISNNAEYGEYVTGPEVINAESRQAMRNALKRIQDGEYAKMFISEGATGYPSMTAKRRNNAAHGIEVIGEQLRSMMPWIGANKIVDKAKN.

In terms of domain architecture, KARI N-terminal Rossmann spans 1 to 181 (MKVYYDKDCD…GGGRTGIIET (181 aa)). Residues 24–27 (YGSQ), Arg47, Ser50, Thr52, and 82–85 (DEFQ) contribute to the NADP(+) site. His107 is a catalytic residue. NADP(+) is bound at residue Gly133. The 146-residue stretch at 182–327 (TFKDETETDL…EQLRSMMPWI (146 aa)) folds into the KARI C-terminal knotted domain. Mg(2+) is bound by residues Asp190, Glu194, Glu226, and Glu230. Ser251 serves as a coordination point for substrate.

Belongs to the ketol-acid reductoisomerase family. Mg(2+) serves as cofactor.

It carries out the reaction (2R)-2,3-dihydroxy-3-methylbutanoate + NADP(+) = (2S)-2-acetolactate + NADPH + H(+). The enzyme catalyses (2R,3R)-2,3-dihydroxy-3-methylpentanoate + NADP(+) = (S)-2-ethyl-2-hydroxy-3-oxobutanoate + NADPH + H(+). Its pathway is amino-acid biosynthesis; L-isoleucine biosynthesis; L-isoleucine from 2-oxobutanoate: step 2/4. It functions in the pathway amino-acid biosynthesis; L-valine biosynthesis; L-valine from pyruvate: step 2/4. Its function is as follows. Involved in the biosynthesis of branched-chain amino acids (BCAA). Catalyzes an alkyl-migration followed by a ketol-acid reduction of (S)-2-acetolactate (S2AL) to yield (R)-2,3-dihydroxy-isovalerate. In the isomerase reaction, S2AL is rearranged via a Mg-dependent methyl migration to produce 3-hydroxy-3-methyl-2-ketobutyrate (HMKB). In the reductase reaction, this 2-ketoacid undergoes a metal-dependent reduction by NADPH to yield (R)-2,3-dihydroxy-isovalerate. The polypeptide is Ketol-acid reductoisomerase (NADP(+)) (Pseudomonas fluorescens (strain SBW25)).